Reading from the N-terminus, the 33-residue chain is Mu-theraphotoxin-Ssp1a (33 aa).

3 disulfides stabilise this stretch: Cys-2-Cys-17, Cys-9-Cys-22, and Cys-16-Cys-29. At Leu-33 the chain carries Leucine amide.

The protein belongs to the neurotoxin 10 (Hwtx-1) family. 22 (Htx-4) subfamily. As to expression, expressed by the venom gland.

The protein resides in the secreted. In terms of biological role, gating modifier toxin that traps voltage-sensing domain II of voltage-gated sodium channels in the resting state without significantly altering the voltage-dependence of activation and inactivation, or delay in recovery from inactivation. Inhibits hNav1.7/SCN9A (IC(50)=134 nM), followed in rank order of potency by Nav1.6/SCN8A (IC(50)=191 nM), Nav1.2/SCN2A (IC(50)=239 nM), Nav1.3/SCN3A (IC(50)=547 nM) and Nav1.1/SCN1A (IC(50)=674 nM). Its binding to Nav1.2, Nav1.3 and Nav1.7 is slowly reversible and incomplete, with ~25% of Nav1.2, ~50% of Nav1.3 and ~40% of Nav1.7 channels recovering from block after a 30 minutes washout, respectively. Binds in the aqueous cleft formed between the S1-S2 and S3-S4 loops of each channel subtype, primarily targeting the S3-S4 loop. The sequence is that of Mu-theraphotoxin-Ssp1a from Selenotypus sp. (Feather-legged tarantula).